A 95-amino-acid chain; its full sequence is Large ribosomal subunit protein uL24c (95 aa).

This sequence belongs to the universal ribosomal protein uL24 family. As to quaternary structure, part of the 50S ribosomal subunit.

The protein localises to the plastid. It localises to the chloroplast. One of two assembly initiator proteins, it binds directly to the 5'-end of the 23S rRNA, where it nucleates assembly of the 50S subunit. In Porphyra purpurea (Red seaweed), this protein is Large ribosomal subunit protein uL24c (rpl24).